Consider the following 175-residue polypeptide: ATP synthase subunit delta (175 aa).

Belongs to the ATPase delta chain family. As to quaternary structure, F-type ATPases have 2 components, F(1) - the catalytic core - and F(0) - the membrane proton channel. F(1) has five subunits: alpha(3), beta(3), gamma(1), delta(1), epsilon(1). F(0) has three main subunits: a(1), b(2) and c(10-14). The alpha and beta chains form an alternating ring which encloses part of the gamma chain. F(1) is attached to F(0) by a central stalk formed by the gamma and epsilon chains, while a peripheral stalk is formed by the delta and b chains.

It is found in the cell membrane. In terms of biological role, f(1)F(0) ATP synthase produces ATP from ADP in the presence of a proton or sodium gradient. F-type ATPases consist of two structural domains, F(1) containing the extramembraneous catalytic core and F(0) containing the membrane proton channel, linked together by a central stalk and a peripheral stalk. During catalysis, ATP synthesis in the catalytic domain of F(1) is coupled via a rotary mechanism of the central stalk subunits to proton translocation. This protein is part of the stalk that links CF(0) to CF(1). It either transmits conformational changes from CF(0) to CF(1) or is implicated in proton conduction. The sequence is that of ATP synthase subunit delta from Stenotrophomonas maltophilia (strain K279a).